A 103-amino-acid chain; its full sequence is Small ribosomal subunit protein uS14c (103 aa).

This sequence belongs to the universal ribosomal protein uS14 family. In terms of assembly, part of the 30S ribosomal subunit.

Its subcellular location is the plastid. The protein localises to the chloroplast. In terms of biological role, binds 16S rRNA, required for the assembly of 30S particles. The protein is Small ribosomal subunit protein uS14c of Lolium perenne (Perennial ryegrass).